A 399-amino-acid polypeptide reads, in one-letter code: 1-deoxy-D-xylulose 5-phosphate reductoisomerase (399 aa).

The NADPH site is built by Thr-13, Gly-14, Ser-15, Ile-16, and Asn-127. Lys-128 serves as a coordination point for 1-deoxy-D-xylulose 5-phosphate. Glu-129 contacts NADPH. Asp-153 lines the Mn(2+) pocket. 4 residues coordinate 1-deoxy-D-xylulose 5-phosphate: Ser-154, Glu-155, Ser-187, and His-210. Position 155 (Glu-155) interacts with Mn(2+). Gly-216 contacts NADPH. Ser-223, Asn-228, Lys-229, and Glu-232 together coordinate 1-deoxy-D-xylulose 5-phosphate. Glu-232 provides a ligand contact to Mn(2+).

Belongs to the DXR family. The cofactor is Mg(2+). Mn(2+) is required as a cofactor.

It carries out the reaction 2-C-methyl-D-erythritol 4-phosphate + NADP(+) = 1-deoxy-D-xylulose 5-phosphate + NADPH + H(+). Its pathway is isoprenoid biosynthesis; isopentenyl diphosphate biosynthesis via DXP pathway; isopentenyl diphosphate from 1-deoxy-D-xylulose 5-phosphate: step 1/6. In terms of biological role, catalyzes the NADPH-dependent rearrangement and reduction of 1-deoxy-D-xylulose-5-phosphate (DXP) to 2-C-methyl-D-erythritol 4-phosphate (MEP). The polypeptide is 1-deoxy-D-xylulose 5-phosphate reductoisomerase (Bordetella pertussis (strain Tohama I / ATCC BAA-589 / NCTC 13251)).